The primary structure comprises 310 residues: MSNPIYNKHIISISDLSRSELELIVSTANDLKQNPRPDLLKNKVVASCFFEASTRTRLSFETAVQRLGGSVIGFPDSGNTSLGKKGETLADSVQVISSYCDAFFMRHNQEGAARLASEFSSAPVINGGDGSNQHPTQTLLDLFSIYETQGTLEKLQVAFVGDLKYGRTVHSLTQALSLFDCEFHFIAPAALSMPDYIIDELKAKGCKYTLHDHLDGVLPNLDILYMTRVQKERFDETEYQHLKSSFILNANMLEGVKENLKVLHPLPRIDEITTDVDSTPYAYYFQQAKNGVYARQALLALVLTNEFGDK.

Carbamoyl phosphate is bound by residues R55 and T56. K85 is an L-aspartate binding site. Positions 106, 134, and 137 each coordinate carbamoyl phosphate. Residues R167 and R228 each contribute to the L-aspartate site. Carbamoyl phosphate-binding residues include L266 and P267.

This sequence belongs to the aspartate/ornithine carbamoyltransferase superfamily. ATCase family. Heterododecamer (2C3:3R2) of six catalytic PyrB chains organized as two trimers (C3), and six regulatory PyrI chains organized as three dimers (R2).

It catalyses the reaction carbamoyl phosphate + L-aspartate = N-carbamoyl-L-aspartate + phosphate + H(+). It functions in the pathway pyrimidine metabolism; UMP biosynthesis via de novo pathway; (S)-dihydroorotate from bicarbonate: step 2/3. Catalyzes the condensation of carbamoyl phosphate and aspartate to form carbamoyl aspartate and inorganic phosphate, the committed step in the de novo pyrimidine nucleotide biosynthesis pathway. The chain is Aspartate carbamoyltransferase catalytic subunit 3 from Shewanella halifaxensis (strain HAW-EB4).